The following is a 298-amino-acid chain: ATP synthase gamma chain (298 aa).

Belongs to the ATPase gamma chain family. F-type ATPases have 2 components, CF(1) - the catalytic core - and CF(0) - the membrane proton channel. CF(1) has five subunits: alpha(3), beta(3), gamma(1), delta(1), epsilon(1). CF(0) has three main subunits: a, b and c.

Its subcellular location is the cell inner membrane. Functionally, produces ATP from ADP in the presence of a proton gradient across the membrane. The gamma chain is believed to be important in regulating ATPase activity and the flow of protons through the CF(0) complex. The sequence is that of ATP synthase gamma chain from Albidiferax ferrireducens (strain ATCC BAA-621 / DSM 15236 / T118) (Rhodoferax ferrireducens).